A 570-amino-acid chain; its full sequence is Trans-cinnamate:CoA ligase, peroxisomal (570 aa).

Positions 568-570 (ARL) match the Microbody targeting signal motif.

This sequence belongs to the ATP-dependent AMP-binding enzyme family. In terms of assembly, monomer. The cofactor is K(+). As to expression, mostly expressed in flower organs, with highest levels in corollas and petal limbs, and, to a lesser extent, in petal tubes, sepals, pistils, stamen, stigma, anthers and ovaries. Also present at low levels in leaves, stems and roots.

The protein resides in the peroxisome. It catalyses the reaction (E)-4-coumarate + ATP + CoA = (E)-4-coumaroyl-CoA + AMP + diphosphate. It carries out the reaction (E)-caffeate + ATP + CoA = (E)-caffeoyl-CoA + AMP + diphosphate. The catalysed reaction is (E)-cinnamate + ATP + CoA = (E)-cinnamoyl-CoA + AMP + diphosphate. The protein operates within phenylpropanoid metabolism; trans-cinnamate biosynthesis. Its pathway is phytoalexin biosynthesis; 3,4',5-trihydroxystilbene biosynthesis; 3,4',5-trihydroxystilbene from trans-4-coumarate: step 1/2. Involved in the biosynthesis of floral volatile benzenoid/phenylpropanoid (FVBP) scent (e.g. benzylbenzoate, phenylethylbenzoate, and methylbenzoate). Catalyzes the formation of CoA esters of cinnamic acid, and, with lower efficiency, of 4-coumaric acid and caffeic acid. This chain is Trans-cinnamate:CoA ligase, peroxisomal, found in Petunia hybrida (Petunia).